The sequence spans 692 residues: Elongation factor G (692 aa).

Positions 8–282 (ENTRNIGIMA…AVIDYLPSPL (275 aa)) constitute a tr-type G domain. Residues 17-24 (AHIDAGKT), 81-85 (DTPGH), and 135-138 (NKMD) contribute to the GTP site.

It belongs to the TRAFAC class translation factor GTPase superfamily. Classic translation factor GTPase family. EF-G/EF-2 subfamily.

It localises to the cytoplasm. Functionally, catalyzes the GTP-dependent ribosomal translocation step during translation elongation. During this step, the ribosome changes from the pre-translocational (PRE) to the post-translocational (POST) state as the newly formed A-site-bound peptidyl-tRNA and P-site-bound deacylated tRNA move to the P and E sites, respectively. Catalyzes the coordinated movement of the two tRNA molecules, the mRNA and conformational changes in the ribosome. The chain is Elongation factor G from Bacillus cereus (strain ATCC 10987 / NRS 248).